Consider the following 461-residue polypeptide: ADP-specific phosphofructokinase (461 aa).

Residues M1–E457 enclose the ADPK domain. Mg(2+)-binding residues include E268, E298, and D441. Residue D441 is the Proton acceptor of the active site.

It belongs to the carbohydrate kinase PfkC family. The cofactor is Mg(2+).

Its subcellular location is the cytoplasm. The enzyme catalyses beta-D-fructose 6-phosphate + ADP = beta-D-fructose 1,6-bisphosphate + AMP + H(+). The protein operates within carbohydrate degradation; glycolysis. Its function is as follows. Catalyzes the phosphorylation of fructose 6-phosphate to fructose 1,6-bisphosphate using ADP as the phosphate donor. This is ADP-specific phosphofructokinase from Thermococcus zilligii.